The following is an 840-amino-acid chain: Axin-2 (840 aa).

The segment at 1–75 is disordered; sequence MSSAVLVTLL…EGRASPDSPL (75 aa). The short motif at 21–30 is the Tankyrase-binding motif element; sequence APRPPVPGEE. The span at 42-55 shows a compositional bias: polar residues; the sequence is KVQSTKPMPVSSNA. Basic and acidic residues predominate over residues 56–69; the sequence is RRNEDGLGEPEGRA. The RGS domain occupies 81-200; sequence SLHSLLGDQD…LTSDIYLEYV (120 aa). Disordered stretches follow at residues 300–363, 398–435, 447–485, 572–614, and 715–745; these read SELS…KEMT, IREDEEKEGSEQALSSRDGAPVQHPLALLPSGSYEEDP, LKTPGCQSPGVGRYSPRSRSPDHHHQHHHHQQCHTLLPT, RGGT…GDRS, and ASQQRDRNHSAAGQAGASPFANPSLAPEDHK. The span at 303–318 shows a compositional bias: low complexity; the sequence is SSDALTDDSMSMTDSS. Positions 327–413 are interaction with GSK3B; sequence MGSKKQLQRE…KEGSEQALSS (87 aa). The interaction with beta-catenin stretch occupies residues 413–478; sequence SRDGAPVQHP…HHHQHHHHQQ (66 aa). Residues 468–478 are compositionally biased toward basic residues; the sequence is DHHHQHHHHQQ. One can recognise a DIX domain in the interval 758–840; that stretch reads ASELVVTYFF…RILGKVERID (83 aa).

In terms of assembly, interacts with glycogen synthase kinase-3 beta (GSK3B) and beta-catenin. The interaction between axin and beta-catenin occurs via the armadillo repeats contained in beta-catenin. Interacts with SMAD7 and RNF111. Interacts with ANKRD6. Interacts with SIAH1. Interacts with SIAH2. Post-translationally, ADP-ribosylated by tankyrase TNKS and TNKS2. Poly-ADP-ribosylated protein is recognized by RNF146, followed by ubiquitination and subsequent activation of the Wnt signaling pathway. In terms of processing, ubiquitinated by RNF146 when poly-ADP-ribosylated, leading to its degradation and subsequent activation of the Wnt signaling pathway. Deubiquitinated by USP34, deubiquitinated downstream of beta-catenin stabilization step: deubiquitination is important Wnt signaling to positively regulate beta-catenin (CTNBB1)-mediated transcription. Probably phosphorylated by GSK3B and dephosphorylated by PP2A. As to expression, expressed in Tcf7-positive innate-like T-cells (at protein level).

It localises to the cytoplasm. Its function is as follows. Inhibitor of the Wnt signaling pathway. Down-regulates beta-catenin. Probably facilitate the phosphorylation of beta-catenin and APC by GSK3B. The protein is Axin-2 of Mus musculus (Mouse).